Reading from the N-terminus, the 63-residue chain is Large ribosomal subunit protein bL32 (63 aa).

Positions methionine 1–alanine 27 are disordered. A compositionally biased stretch (basic residues) spans lysine 7–alanine 18.

The protein belongs to the bacterial ribosomal protein bL32 family.

The chain is Large ribosomal subunit protein bL32 from Pelodictyon phaeoclathratiforme (strain DSM 5477 / BU-1).